A 487-amino-acid chain; its full sequence is L-tartrate/succinate antiporter (487 aa).

14 helical membrane passes run 10-30 (YLAPLAVIAIIALIPVPAGLE), 33-53 (TWLYFAVFTGVIVGLILEPVP), 54-74 (GAVVAMVGISIIAILSPWLLF), 93-113 (WAVFGFSNSVIWLIFAAFMFG), 137-157 (TLFLGYAVMFSELILAPVTPS), 189-209 (IGSYIMWMGIVADCVTSAIFL), 236-256 (FLGMLPLSILLVLLVPWLAYV), 292-312 (LMVGALVLWIFGGDYIDAAMV), 313-333 (GYSVVALMLLLRIISWDDIVS), 340-360 (VFFWLASLITLATGLNNTGFI), 370-390 (SLSGYSPTMVMVALIVVFYLL), 393-413 (FFASATAYTSALAPMMIAAAL), 418-438 (IPLPVFCLMVGAAIGLGSILT), and 465-485 (IFGLIFLVLLVITGLLWMPVV).

It belongs to the SLC13A/DASS transporter (TC 2.A.47) family. DIT1 subfamily.

Its subcellular location is the cell inner membrane. It catalyses the reaction (2R,3R)-tartrate(out) + succinate(in) = (2R,3R)-tartrate(in) + succinate(out). Catalyzes the uptake of tartrate in exchange for intracellular succinate. Essential for anaerobic L-tartrate fermentation. This is L-tartrate/succinate antiporter (ttdT) from Shigella boydii serotype 4 (strain Sb227).